We begin with the raw amino-acid sequence, 426 residues long: Enolase (426 aa).

Glycine 41 contributes to the phosphoenolpyruvate binding site. Mg(2+) is bound at residue serine 43. Residue glutamate 165 participates in phosphoenolpyruvate binding. (2R)-2-phosphoglycerate-binding residues include glutamate 165 and glutamate 206. Glutamate 206 acts as the Proton donor in catalysis. 3 residues coordinate Mg(2+): aspartate 243, glutamate 286, and aspartate 313. Phosphoenolpyruvate-binding residues include aspartate 313, lysine 338, arginine 367, serine 368, and lysine 389. 3 residues coordinate (2R)-2-phosphoglycerate: lysine 338, arginine 367, and serine 368. The active-site Proton acceptor is lysine 338.

The protein belongs to the enolase family. In terms of assembly, homodimer. The cofactor is Mg(2+).

It is found in the cytoplasm. The protein localises to the secreted. It localises to the cell surface. It catalyses the reaction (2R)-2-phosphoglycerate = phosphoenolpyruvate + H2O. The protein operates within carbohydrate degradation; glycolysis; pyruvate from D-glyceraldehyde 3-phosphate: step 4/5. Catalyzes the reversible conversion of 2-phosphoglycerate (2-PG) into phosphoenolpyruvate (PEP). It is essential for the degradation of carbohydrates via glycolysis. This is Enolase from Chloroflexus aurantiacus (strain ATCC 29366 / DSM 635 / J-10-fl).